Reading from the N-terminus, the 436-residue chain is Methylenetetrahydrofolate--tRNA-(uracil-5-)-methyltransferase TrmFO (436 aa).

Residue 8–13 (GAGLAG) coordinates FAD.

Belongs to the MnmG family. TrmFO subfamily. FAD is required as a cofactor.

The protein resides in the cytoplasm. It catalyses the reaction uridine(54) in tRNA + (6R)-5,10-methylene-5,6,7,8-tetrahydrofolate + NADH + H(+) = 5-methyluridine(54) in tRNA + (6S)-5,6,7,8-tetrahydrofolate + NAD(+). The enzyme catalyses uridine(54) in tRNA + (6R)-5,10-methylene-5,6,7,8-tetrahydrofolate + NADPH + H(+) = 5-methyluridine(54) in tRNA + (6S)-5,6,7,8-tetrahydrofolate + NADP(+). Functionally, catalyzes the folate-dependent formation of 5-methyl-uridine at position 54 (M-5-U54) in all tRNAs. The sequence is that of Methylenetetrahydrofolate--tRNA-(uracil-5-)-methyltransferase TrmFO from Persephonella marina (strain DSM 14350 / EX-H1).